Reading from the N-terminus, the 487-residue chain is 1,4-beta-D-glucan cellobiohydrolase CEL6A (487 aa).

The signal sequence occupies residues 1–17; that stretch reads MASKLFLAAALLQGALS. In terms of domain architecture, CBM1 spans 27–63; the sequence is ACAAQWGQCGGQDYTGPTCCQSGSTCVVSNQWYSQCL. 2 disulfide bridges follow: C35–C52 and C46–C62. A compositionally biased stretch (low complexity) spans 64-117; that stretch reads PGSSNPTTTSRTSTSSSSSTSRTSSSTSRPPSSVPTTPTSVPPTITTTPTTTPT. The disordered stretch occupies residues 64-127; the sequence is PGSSNPTTTS…GGSGPGTTAS (64 aa). Substrate-binding residues include W175 and D177. D216 is a catalytic residue. Catalysis depends on D262, which acts as the Proton donor. Residues H307, W310, N346, W407, K435, and E439 each contribute to the substrate site. Catalysis depends on D441, which acts as the Proton acceptor.

This sequence belongs to the glycosyl hydrolase 6 (cellulase B) family.

It localises to the secreted. The enzyme catalyses Hydrolysis of (1-&gt;4)-beta-D-glucosidic linkages in cellulose and cellotetraose, releasing cellobiose from the non-reducing ends of the chains.. In terms of biological role, exoglucanase that plays an important function in biomass degradation by catalyzing the hydrolysis of the non-reducing end beta-1,4-glucosidic linkages in cellulose and cellotetraose to release cellobiose. Shows higher hydrolytic activities on phosphoric acid-swollen cellulose (PSC), beta-glucan, and cellooligosaccharide derivatives than on cellulose, of which the best substrates were cellooligosaccharides. The polypeptide is 1,4-beta-D-glucan cellobiohydrolase CEL6A (Pyricularia oryzae (strain 70-15 / ATCC MYA-4617 / FGSC 8958) (Rice blast fungus)).